Reading from the N-terminus, the 256-residue chain is Imidazole glycerol phosphate synthase subunit HisF (256 aa).

Active-site residues include aspartate 12 and aspartate 131.

The protein belongs to the HisA/HisF family. In terms of assembly, heterodimer of HisH and HisF.

The protein resides in the cytoplasm. The enzyme catalyses 5-[(5-phospho-1-deoxy-D-ribulos-1-ylimino)methylamino]-1-(5-phospho-beta-D-ribosyl)imidazole-4-carboxamide + L-glutamine = D-erythro-1-(imidazol-4-yl)glycerol 3-phosphate + 5-amino-1-(5-phospho-beta-D-ribosyl)imidazole-4-carboxamide + L-glutamate + H(+). It participates in amino-acid biosynthesis; L-histidine biosynthesis; L-histidine from 5-phospho-alpha-D-ribose 1-diphosphate: step 5/9. IGPS catalyzes the conversion of PRFAR and glutamine to IGP, AICAR and glutamate. The HisF subunit catalyzes the cyclization activity that produces IGP and AICAR from PRFAR using the ammonia provided by the HisH subunit. The chain is Imidazole glycerol phosphate synthase subunit HisF from Thermobifida fusca (strain YX).